The chain runs to 641 residues: Protein TIC 62, chloroplastic (641 aa).

A chloroplast-targeting transit peptide spans 1–63 (MEGTCFLRGQ…LSLRASGPIR (63 aa)). N-acetylalanine is present on alanine 64. Position 84 to 113 (84 to 113 (VFVAGATGKVGSRTVRELLKLGFRVRAGVR)) interacts with NADP(+). The disordered stretch occupies residues 328–641 (SKRPYVPPPK…SPLPSPVTNH (314 aa)). A compositionally biased stretch (basic and acidic residues) spans 359-372 (APKEDEAPPKEKNV). Repeat copies occupy residues 376–397 (PLSP…PNST) and 444–465 (PLSP…PTAS). The segment at 376-638 (PLSPYASYED…PPTSPLPSPV (263 aa)) is 4 X 22 AA approximate repeats. Positions 393–402 (IPNSTTSVSP) are enriched in low complexity. The segment covering 435–444 (KQVEEKKERP) has biased composition (basic and acidic residues). Residues 485–528 (SSTVAKTVTETAVATSVTETSVATSVPETAVATSVTETAAPATS) show a composition bias toward low complexity. Repeat unit 3 spans residues 532 to 553 (PLSPYAIYADLKPPTSPTPAST). Polar residues predominate over residues 599–612 (AIDTSLASGDNTAQ). The stretch at 617–638 (PLSPYTMYADMKPPTSPLPSPV) is repeat 4. The segment covering 630–641 (PTSPLPSPVTNH) has biased composition (pro residues).

In terms of assembly, part of the Tic complex. Interacts with TIC110 and TIC55. Interacts with LFNR1 and LFNR2. Component of high molecular weight thylakoid LFNRs-containing protein complexes containing LIR1, LFNR1, LFNR2, TIC62 and TROL proteins. In terms of tissue distribution, expressed in cotyledons and leaves, but not in roots.

It localises to the plastid. Its subcellular location is the chloroplast inner membrane. It is found in the chloroplast stroma. The protein localises to the chloroplast thylakoid. In terms of biological role, involved in protein precursor import into chloroplasts. Part of the redox regulon consisting of TIC32, TIC 55 and TIC62. Acts as a membrane anchor of LFNR1 and LFNR2. Has a NADPH-dependent dehydrogenase activity, but only after preincubation with lipids. The sequence is that of Protein TIC 62, chloroplastic from Arabidopsis thaliana (Mouse-ear cress).